The following is a 265-amino-acid chain: HUWE1-associated protein modifying stress responses (265 aa).

4 disordered regions span residues 1-22 (MEDK…HWFS), 145-170 (RNSR…GSSV), 195-218 (VRSS…RRNG), and 240-265 (GTRK…NRMI). Composition is skewed to polar residues over residues 156–170 (VSPN…GSSV) and 195–212 (VRSS…SSNT).

The protein belongs to the TAPR1 family. In terms of assembly, oligomer.

It is found in the nucleus. It localises to the cytoplasm. Functionally, acts as a central player within a network of stress response pathways promoting cellular adaptability. Functions as a negative regulator of TP53/P53 in the cellular response to telomere erosion and probably also DNA damage. The chain is HUWE1-associated protein modifying stress responses from Xenopus laevis (African clawed frog).